The primary structure comprises 66 residues: Large ribosomal subunit protein bL35 (66 aa).

Composition is skewed to basic residues over residues 1-16 (MPKFKTHRASAKRFKK) and 23-45 (KRGHAYTSHRFHGKTKKQRRQLR). Residues 1–66 (MPKFKTHRAS…RIRQMLSQMK (66 aa)) are disordered.

Belongs to the bacterial ribosomal protein bL35 family.

The polypeptide is Large ribosomal subunit protein bL35 (Lacticaseibacillus casei (strain BL23) (Lactobacillus casei)).